The chain runs to 330 residues: Transcriptional regulatory protein PHO23 (330 aa).

Residues 139 to 272 form a disordered region; sequence EKIESKSNSK…NSNNSRISRP (134 aa). Residues 231–254 show a composition bias toward polar residues; the sequence is TAVSPSTISTATAVNNGRIGTSTA. The span at 255–269 shows a compositional bias: low complexity; sequence SRGVSSVGNSNNSRI. Residues 280–329 form a PHD-type zinc finger; that stretch reads PLYCYCNQVAYGEMVGCDGADCELEWFHLPCIGLETLPKGKWYCDDCKKK. Positions 283, 285, 296, 301, 307, 310, 323, and 326 each coordinate Zn(2+).

Belongs to the ING family. As to quaternary structure, interacts with H3K4me3 and to a lesser extent with H3K4me2. Component of the RPD3C(L) complex composed of at least ASH1, CTI6, DEP1, PHO23, RPD3, RXT2, RXT3, SAP30, SDS3, SIN3, UME1 and UME6.

It is found in the nucleus. Component of the RPD3C(L) histone deacetylase complex (HDAC) responsible for the deacetylation of lysine residues on the N-terminal part of the core histones (H2A, H2B, H3 and H4). Histone deacetylation gives a tag for epigenetic repression and plays an important role in transcriptional regulation, cell cycle progression and developmental events. This chain is Transcriptional regulatory protein PHO23 (PHO23), found in Saccharomyces cerevisiae (strain ATCC 204508 / S288c) (Baker's yeast).